The primary structure comprises 571 residues: Proline--tRNA ligase (571 aa).

The protein belongs to the class-II aminoacyl-tRNA synthetase family. ProS type 1 subfamily. In terms of assembly, homodimer.

It localises to the cytoplasm. It catalyses the reaction tRNA(Pro) + L-proline + ATP = L-prolyl-tRNA(Pro) + AMP + diphosphate. In terms of biological role, catalyzes the attachment of proline to tRNA(Pro) in a two-step reaction: proline is first activated by ATP to form Pro-AMP and then transferred to the acceptor end of tRNA(Pro). As ProRS can inadvertently accommodate and process non-cognate amino acids such as alanine and cysteine, to avoid such errors it has two additional distinct editing activities against alanine. One activity is designated as 'pretransfer' editing and involves the tRNA(Pro)-independent hydrolysis of activated Ala-AMP. The other activity is designated 'posttransfer' editing and involves deacylation of mischarged Ala-tRNA(Pro). The misacylated Cys-tRNA(Pro) is not edited by ProRS. The polypeptide is Proline--tRNA ligase (Vibrio vulnificus (strain CMCP6)).